We begin with the raw amino-acid sequence, 311 residues long: Glutaminase (311 aa).

Substrate contacts are provided by serine 66, asparagine 116, glutamate 162, asparagine 169, tyrosine 193, tyrosine 245, and valine 263.

Belongs to the glutaminase family. In terms of assembly, homotetramer.

It catalyses the reaction L-glutamine + H2O = L-glutamate + NH4(+). This chain is Glutaminase, found in Rhodopseudomonas palustris (strain BisB5).